Here is a 2278-residue protein sequence, read N- to C-terminus: Protein Ycf2 (2278 aa).

Belongs to the Ycf2 family.

The protein localises to the plastid. The protein resides in the chloroplast stroma. It is found in the chromoplast stroma. Functionally, probable ATPase of unknown function. Its presence in a non-photosynthetic plant (Epifagus virginiana) and experiments in tobacco indicate that it has an essential function which is probably not related to photosynthesis. The polypeptide is Protein Ycf2 (ycf2-A) (Solanum lycopersicum (Tomato)).